Reading from the N-terminus, the 365-residue chain is UDP-galactose transporter homolog 1 (365 aa).

Transmembrane regions (helical) follow at residues 42-62 and 80-100; these read IIDLIICVSGIYASFLTWAVL and ASLVINTVQSFLAAAVGYAYL. Asn-115 carries an N-linked (GlcNAc...) asparagine glycan. The next 2 membrane-spanning stretches (helical) occupy residues 182-202 and 206-226; these read YAVVVLVTIGVSMFTIFHAAP and SGAGSEHQLYGLGLLGISMLL. A glycan (N-linked (GlcNAc...) asparagine) is linked at Asn-231. 4 helical membrane-spanning segments follow: residues 249–269, 289–309, 315–335, and 339–359; these read VMCGLNLLTGVFTTVSLLTFS, DIVLFGLCGAVGQVFIFQTLE, VLVTVNVTRKMFSMLLSVVWF, and LTLGQWAGVAAVFGGIGFEAW.

Belongs to the nucleotide-sugar transporter family. SLC35B subfamily.

Its subcellular location is the endoplasmic reticulum membrane. May be involved in specific transport of UDP-Gal from the cytosol to the Golgi lumen. Involved in the maintenance of optimal conditions for the folding of secretory pathway proteins in the endoplasmic reticulum. The chain is UDP-galactose transporter homolog 1 (HUT1) from Yarrowia lipolytica (strain CLIB 122 / E 150) (Yeast).